The primary structure comprises 483 residues: ATP-dependent RNA helicase DDX25 (483 aa).

The Q motif motif lies at 97–125 (KSFEELHLKNELLRGIYAMGFNRPSKIQE). Residues 130 to 300 (MMLADPPQNL…ERIVPDPNII (171 aa)) form the Helicase ATP-binding domain. 143 to 150 (SQSGTGKT) is an ATP binding site. Positions 247-250 (DEAD) match the DEAD box motif. Positions 311–478 (NIQQFYDQCE…KLNSMDMDEM (168 aa)) constitute a Helicase C-terminal domain.

Belongs to the DEAD box helicase family. As to expression, an mRNA component of germ plasm. Localizes to the granulo-fibrillar material (GFM) of the mitochondrial cloud in stage I oocytes. Associated, at a low level, with the periphery of mature germinal granules in later stage oocytes. Localizes to the vegetal cortex in stage II oocytes and segregates with germ plasm during early embryogenesis. In adults, expression is restricted to the ovary and, at a lower level, to spermatogonia, spermatocytes and spermatids of the testis.

Its subcellular location is the cytoplasm. The protein localises to the nucleus. The enzyme catalyses ATP + H2O = ADP + phosphate + H(+). Its function is as follows. ATP-dependent RNA helicase. The polypeptide is ATP-dependent RNA helicase DDX25 (Xenopus laevis (African clawed frog)).